Consider the following 265-residue polypeptide: Oxidoreductase nsrR (265 aa).

Belongs to the avfA family.

It participates in secondary metabolite biosynthesis. Oxidoreductase; part of the gene cluster that mediates the biosynthesis of the tetrahydroxanthone dimer neosartorin, which exhibits antibacterial activity. The two different monomeric units appear to be synthesized by the same set of enzymes, among which the Baeyer-Villiger monooxygenase nsrF is the key enzyme for the divergence of the biosynthetic routes. The pathway begins with the synthesis of atrochrysone thioester by the polyketide synthase nsrB. The atrochrysone carboxyl ACP thioesterase nsrC then breaks the thioester bond and releases the atrochrysone carboxylic acid from AacuL. Atrochrysone carboxylic acid is decarboxylated by the decarboxylase nsrE, and oxidized by the anthrone oxygenase nsrD to yield emodin. Emodin is then reduced to emodin hydroquinone by the oxidoreductase nsrR. A-ring reduction by the short chain dehydrogenase nsrJ, dehydration by the scytalone dehydratase-like protein nsrI and probable spontaneous re-oxidation, results in overall deoxygenation to chrysophanol. The Baeyer-Villiger monooxygenase nsrF accepts chrysophanol as a substrate to insert one oxygen atom at two different positions to yield the precursors of both monomric units. NsrF is promiscuous/flexible in interacting with the 2 (non methylated and methylated) aromatic rings of chrysophanol, thus diverging the biosynthetic pathway at this point. After the hydrolysis of the lactones, methylesterification by the methyltransferase nsrG yields respectively moniliphenone and 2,2',6'-trihydroxy-4-methyl-6-methoxya-cyldiphenylmethanone. The next steps are the hydroxylation by the FAD-dependent monooxygenase nsrK, followed by isomerization by the monooxygenase nsrQ. The short chain dehydrogenase/reductase nsrO then catalyzes the C-5 ketoreduction to give the xanthone skeleton of blennolide C and 5-acetylblennolide A. The acetyltransferase nsrL has a strict substrate specificity and uses only blennolide A but not blennolide C to yield 5-acetylblennolide A as the single-acetylated product. In the final step of the biosynthesis, the heterodimerization of the 2 xanthones, blennolide C and 5-acetylblennolide A, is catalyzed by the cytochrome P450 monooxygenase nsrP. NsrP can utilize at least three different xanthones as its substrates to perform the dimerization reaction. This chain is Oxidoreductase nsrR, found in Aspergillus novofumigatus (strain IBT 16806).